We begin with the raw amino-acid sequence, 340 residues long: Ferrochelatase (340 aa).

Residues His-218 and Glu-298 each contribute to the Fe cation site.

This sequence belongs to the ferrochelatase family.

The protein localises to the cytoplasm. The enzyme catalyses heme b + 2 H(+) = protoporphyrin IX + Fe(2+). Its pathway is porphyrin-containing compound metabolism; protoheme biosynthesis; protoheme from protoporphyrin-IX: step 1/1. In terms of biological role, catalyzes the ferrous insertion into protoporphyrin IX. The polypeptide is Ferrochelatase (Wolbachia sp. subsp. Brugia malayi (strain TRS)).